Reading from the N-terminus, the 367-residue chain is MTHRTKTRPVKVGNLTIGGNNELIIQSMTTTKTHDVEATVAEIKRLEEAGCQVVRVAVPDERAANAIADIKKQINIPLVADIHFDYRLALKAIEGGIDKVRINPGNIGRRHKVEAVVNAAKERGIPIRIGVNAGSLERHILEKYGYPTADGMVESALHHIKILEDLDFHDIIVSMKASDVNLAIEAYEKAARAFDYPLHLGITESGTLFAGTVKSAAGLGAILNKGIGNTLRISLSADPVEEVKVARELLKSFGLASNAATLISCPTCGRIEIDLISIANEVEEYISTLQVPIKVAVLGCAVNGPGEAREADIGIAGARGEGLLFRKGQVVRKVPEEIMVEELKKEIDVIAAEMAAEREKEKETQEQ.

[4Fe-4S] cluster contacts are provided by Cys-265, Cys-268, Cys-300, and Glu-307.

It belongs to the IspG family. It depends on [4Fe-4S] cluster as a cofactor.

It carries out the reaction (2E)-4-hydroxy-3-methylbut-2-enyl diphosphate + oxidized [flavodoxin] + H2O + 2 H(+) = 2-C-methyl-D-erythritol 2,4-cyclic diphosphate + reduced [flavodoxin]. The protein operates within isoprenoid biosynthesis; isopentenyl diphosphate biosynthesis via DXP pathway; isopentenyl diphosphate from 1-deoxy-D-xylulose 5-phosphate: step 5/6. Converts 2C-methyl-D-erythritol 2,4-cyclodiphosphate (ME-2,4cPP) into 1-hydroxy-2-methyl-2-(E)-butenyl 4-diphosphate. The chain is 4-hydroxy-3-methylbut-2-en-1-yl diphosphate synthase (flavodoxin) from Bacillus anthracis.